Reading from the N-terminus, the 260-residue chain is UPF0246 protein Bphyt_1375 (260 aa).

This sequence belongs to the UPF0246 family.

In Paraburkholderia phytofirmans (strain DSM 17436 / LMG 22146 / PsJN) (Burkholderia phytofirmans), this protein is UPF0246 protein Bphyt_1375.